The chain runs to 1072 residues: Isoleucine--tRNA ligase, cytoplasmic (1072 aa).

The 'HIGH' region motif lies at 47-57 (PFATGTPHYGH). K486 is covalently cross-linked (Glycyl lysine isopeptide (Lys-Gly) (interchain with G-Cter in ubiquitin)). Positions 602–606 (KMSKS) match the 'KMSKS' region motif. K605 provides a ligand contact to ATP. 2 positions are modified to phosphoserine: S829 and S1059.

It belongs to the class-I aminoacyl-tRNA synthetase family.

Its subcellular location is the cytoplasm. The catalysed reaction is tRNA(Ile) + L-isoleucine + ATP = L-isoleucyl-tRNA(Ile) + AMP + diphosphate. This Saccharomyces cerevisiae (strain ATCC 204508 / S288c) (Baker's yeast) protein is Isoleucine--tRNA ligase, cytoplasmic (ILS1).